The primary structure comprises 161 residues: Ribonuclease H (161 aa).

Positions 12–155 (QPQHVVIYTD…ADALANKGVE (144 aa)) constitute an RNase H type-1 domain. The Mg(2+) site is built by Asp21, Glu59, Asp81, and Asp147.

The protein belongs to the RNase H family. Monomer. Requires Mg(2+) as cofactor.

It localises to the cytoplasm. It carries out the reaction Endonucleolytic cleavage to 5'-phosphomonoester.. In terms of biological role, endonuclease that specifically degrades the RNA of RNA-DNA hybrids. This chain is Ribonuclease H, found in Polaromonas naphthalenivorans (strain CJ2).